We begin with the raw amino-acid sequence, 359 residues long: DNA integrity scanning protein DisA (359 aa).

Residues 7–146 (DDIFRATLAA…GRRYVLDGSA (140 aa)) enclose the DAC domain. ATP is bound by residues G74, L92, and 105–109 (TRHRT).

This sequence belongs to the DisA family. In terms of assembly, homooctamer. Mg(2+) serves as cofactor.

It carries out the reaction 2 ATP = 3',3'-c-di-AMP + 2 diphosphate. In terms of biological role, participates in a DNA-damage check-point that is active prior to asymmetric division when DNA is damaged. DisA forms globular foci that rapidly scan along the chromosomes during sporulation, searching for lesions. When a lesion is present, DisA pauses at the lesion site. This triggers a cellular response that culminates in a temporary block in sporulation initiation. Functionally, also has diadenylate cyclase activity, catalyzing the condensation of 2 ATP molecules into cyclic di-AMP (c-di-AMP). c-di-AMP acts as a signaling molecule that couples DNA integrity with progression of sporulation. The rise in c-di-AMP level generated by DisA while scanning the chromosome, operates as a positive signal that advances sporulation; upon encountering a lesion, the DisA focus arrests at the damaged site and halts c-di-AMP synthesis. The chain is DNA integrity scanning protein DisA from Frankia alni (strain DSM 45986 / CECT 9034 / ACN14a).